The sequence spans 141 residues: MRHYEIIFLVHPDQSEQVGGMVERYTKLIEEDGGKIHRLEDWGRRQLAYAINNVHKAHYVMLNVECTGKALAELEDNFRYNDAVIRNLVIRRDEAVTGQSEMLKAEENRSERRERRERPEHADSAEGDDSNDSDSSDNADE.

Residues 96 to 141 (VTGQSEMLKAEENRSERRERRERPEHADSAEGDDSNDSDSSDNADE) form a disordered region. Over residues 103–124 (LKAEENRSERRERRERPEHADS) the composition is skewed to basic and acidic residues. Acidic residues predominate over residues 125–141 (AEGDDSNDSDSSDNADE).

The protein belongs to the bacterial ribosomal protein bS6 family.

Binds together with bS18 to 16S ribosomal RNA. The protein is Small ribosomal subunit protein bS6 of Pseudomonas putida (strain ATCC 700007 / DSM 6899 / JCM 31910 / BCRC 17059 / LMG 24140 / F1).